Reading from the N-terminus, the 33-residue chain is uncharacterized protein (33 aa).

Residues Leu-11–Phe-31 traverse the membrane as a helical segment.

It localises to the membrane. This is an uncharacterized protein from Saccharomyces cerevisiae (strain ATCC 204508 / S288c) (Baker's yeast).